The primary structure comprises 874 residues: Alanine--tRNA ligase (874 aa).

Zn(2+)-binding residues include H562, H566, C665, and H669.

The protein belongs to the class-II aminoacyl-tRNA synthetase family. Requires Zn(2+) as cofactor.

The protein localises to the cytoplasm. It carries out the reaction tRNA(Ala) + L-alanine + ATP = L-alanyl-tRNA(Ala) + AMP + diphosphate. Its function is as follows. Catalyzes the attachment of alanine to tRNA(Ala) in a two-step reaction: alanine is first activated by ATP to form Ala-AMP and then transferred to the acceptor end of tRNA(Ala). Also edits incorrectly charged Ser-tRNA(Ala) and Gly-tRNA(Ala) via its editing domain. The polypeptide is Alanine--tRNA ligase (Pseudomonas paraeruginosa (strain DSM 24068 / PA7) (Pseudomonas aeruginosa (strain PA7))).